We begin with the raw amino-acid sequence, 176 residues long: NADH-quinone oxidoreductase subunit I (176 aa).

4Fe-4S ferredoxin-type domains follow at residues 47–77 (LTRD…MQAA) and 87–116 (AWFR…MTSE). Residues Cys-57, Cys-60, Cys-63, Cys-67, Cys-96, Cys-99, Cys-102, and Cys-106 each contribute to the [4Fe-4S] cluster site.

It belongs to the complex I 23 kDa subunit family. As to quaternary structure, NDH-1 is composed of 14 different subunits. Subunits NuoA, H, J, K, L, M, N constitute the membrane sector of the complex. [4Fe-4S] cluster serves as cofactor.

Its subcellular location is the cell inner membrane. It carries out the reaction a quinone + NADH + 5 H(+)(in) = a quinol + NAD(+) + 4 H(+)(out). In terms of biological role, NDH-1 shuttles electrons from NADH, via FMN and iron-sulfur (Fe-S) centers, to quinones in the respiratory chain. The immediate electron acceptor for the enzyme in this species is believed to be ubiquinone. Couples the redox reaction to proton translocation (for every two electrons transferred, four hydrogen ions are translocated across the cytoplasmic membrane), and thus conserves the redox energy in a proton gradient. The polypeptide is NADH-quinone oxidoreductase subunit I (Syntrophotalea carbinolica (strain DSM 2380 / NBRC 103641 / GraBd1) (Pelobacter carbinolicus)).